The primary structure comprises 424 residues: UPF0053 protein MG146 (424 aa).

The 186-residue stretch at 6-191 (SGLTLTVIIL…EQNGLFSKED (186 aa)) folds into the CNNM transmembrane domain. A run of 4 helical transmembrane segments spans residues 7–27 (GLTL…STVV), 71–91 (LITI…ILFL), 101–121 (LLSS…FCEI), and 135–155 (LVLF…ITKL). 2 consecutive CBS domains span residues 210-270 (MIKW…PKSL) and 272-332 (LNQL…IYDE).

This sequence belongs to the UPF0053 family.

It is found in the cell membrane. The sequence is that of UPF0053 protein MG146 from Mycoplasma genitalium (strain ATCC 33530 / DSM 19775 / NCTC 10195 / G37) (Mycoplasmoides genitalium).